A 295-amino-acid chain; its full sequence is Pyridoxal 5'-phosphate synthase subunit PdxS (295 aa).

Asp-25 serves as a coordination point for D-ribose 5-phosphate. Lys-82 acts as the Schiff-base intermediate with D-ribose 5-phosphate in catalysis. Gly-154 is a D-ribose 5-phosphate binding site. Residue Arg-166 participates in D-glyceraldehyde 3-phosphate binding. D-ribose 5-phosphate contacts are provided by residues Gly-215 and 236–237; that span reads GS.

Belongs to the PdxS/SNZ family. As to quaternary structure, in the presence of PdxT, forms a dodecamer of heterodimers.

The catalysed reaction is aldehydo-D-ribose 5-phosphate + D-glyceraldehyde 3-phosphate + L-glutamine = pyridoxal 5'-phosphate + L-glutamate + phosphate + 3 H2O + H(+). It participates in cofactor biosynthesis; pyridoxal 5'-phosphate biosynthesis. Functionally, catalyzes the formation of pyridoxal 5'-phosphate from ribose 5-phosphate (RBP), glyceraldehyde 3-phosphate (G3P) and ammonia. The ammonia is provided by the PdxT subunit. Can also use ribulose 5-phosphate and dihydroxyacetone phosphate as substrates, resulting from enzyme-catalyzed isomerization of RBP and G3P, respectively. The chain is Pyridoxal 5'-phosphate synthase subunit PdxS from Bacillus cereus (strain G9842).